A 427-amino-acid polypeptide reads, in one-letter code: Serine/threonine-protein kinase ssn3 (427 aa).

The Protein kinase domain occupies 40–369; sequence YHIVGFISSG…AQEALEHPYF (330 aa). ATP-binding positions include 46 to 54 and Lys-70; that span reads ISSGTYGRV. The active-site Proton acceptor is the Asp-172. Residues 390-399 show a composition bias toward basic and acidic residues; sequence RRVTQDDNDI. The disordered stretch occupies residues 390–427; it reads RRVTQDDNDIRSGSLPGTKRSGLPDDSLLGRATKRLKE.

The protein belongs to the protein kinase superfamily. CMGC Ser/Thr protein kinase family. CDC2/CDKX subfamily. As to quaternary structure, component of the srb8-11 complex, a regulatory module of the Mediator complex. Mg(2+) is required as a cofactor.

Its subcellular location is the nucleus. The enzyme catalyses L-seryl-[protein] + ATP = O-phospho-L-seryl-[protein] + ADP + H(+). It catalyses the reaction L-threonyl-[protein] + ATP = O-phospho-L-threonyl-[protein] + ADP + H(+). The catalysed reaction is [DNA-directed RNA polymerase] + ATP = phospho-[DNA-directed RNA polymerase] + ADP + H(+). Component of the srb8-11 complex. The srb8-11 complex is a regulatory module of the Mediator complex which is itself involved in regulation of basal and activated RNA polymerase II-dependent transcription. The srb8-11 complex may be involved in the transcriptional repression of a subset of genes regulated by Mediator. It may inhibit the association of the Mediator complex with RNA polymerase II to form the holoenzyme complex. The srb8-11 complex phosphorylates the C-terminal domain (CTD) of the largest subunit of RNA polymerase II. The protein is Serine/threonine-protein kinase ssn3 (ssn3) of Aspergillus niger (strain ATCC MYA-4892 / CBS 513.88 / FGSC A1513).